The chain runs to 754 residues: Ubiquitin carboxyl-terminal hydrolase 9 (754 aa).

The segment covering 1–14 (MIKRWLSVNRKKSH) has biased composition (basic residues). The interval 1–76 (MIKRWLSVNR…SKFSSQTDNL (76 aa)) is disordered. Residues 42 to 58 (SIAKSPSAKSSTSSIPS) show a composition bias toward low complexity. The USP domain occupies 134–667 (FGYENFGNTC…TAYVLFYKET (534 aa)). Catalysis depends on C143, which acts as the Nucleophile. Over residues 194–209 (ETSTNSGNSNTGYQSN) the composition is skewed to polar residues. The interval 194-273 (ETSTNSGNSN…DNNEMERPQP (80 aa)) is disordered. Residues 222 to 233 (QSDQDNSSSSTQ) are compositionally biased toward low complexity. A compositionally biased stretch (basic and acidic residues) spans 250 to 272 (GKDKSNYKDSAKKDDNNEMERPQ). H618 (proton acceptor) is an active-site residue. The segment at 726-754 (VKTAETKTPLNDKKRNKQKRKSRILSFIK) is disordered. The segment covering 727–738 (KTAETKTPLNDK) has biased composition (basic and acidic residues). The segment covering 739–748 (KRNKQKRKSR) has biased composition (basic residues).

It belongs to the peptidase C19 family.

It catalyses the reaction Thiol-dependent hydrolysis of ester, thioester, amide, peptide and isopeptide bonds formed by the C-terminal Gly of ubiquitin (a 76-residue protein attached to proteins as an intracellular targeting signal).. The sequence is that of Ubiquitin carboxyl-terminal hydrolase 9 (UBP9) from Saccharomyces cerevisiae (strain ATCC 204508 / S288c) (Baker's yeast).